A 915-amino-acid polypeptide reads, in one-letter code: Protein SLFN14 (915 aa).

Residues 157-167 are compositionally biased toward basic residues; sequence AAQRGRRRLHP. A disordered region spans residues 157 to 176; it reads AAQRGRRRLHPPRASNSNLQ. The interval 204–389 is required for endoribonuclease activity; it reads ESTHVEFKRF…KVLEFKGALQ (186 aa). The interval 390–569 is required for ribosome binding; that stretch reads RHLFPVTQKT…QLGCEFFNLL (180 aa).

As to quaternary structure, associates with ribosomes in an ATP-independent manner. Mg(2+) serves as cofactor. Mn(2+) is required as a cofactor. Detected in reticulocytes (at protein level).

It localises to the nucleus. Its function is as follows. Shows no ribosome-associated and endoribonuclease activities. Displays polysome-associated endoribonuclease activity towards mRNAs and rRNAs. May play a role in RNA surveillance pathways by recognizing stalled ribosomes and triggering endonucleolytic cleavage of aberrant mRNAs. Cleaves RNAs in a magnesium-, manganese-dependent and ATP-independent manner. Involved in correct maturation of megakaryocytes and especially important for proplatelet extension. In Oryctolagus cuniculus (Rabbit), this protein is Protein SLFN14.